We begin with the raw amino-acid sequence, 241 residues long: Agamous-like MADS-box protein AGL8 homolog (241 aa).

The MADS-box domain occupies 3–57 (RGRVQLKRIENKINRQVTFSKRRSGLLKKAHEISVLCDAEVALVIFSSKGKLFEY). One can recognise a K-box domain in the interval 88–178 (SENWVLEHAK…LKKIKEREKN (91 aa)).

It is found in the nucleus. Functionally, probable transcription factor. This is Agamous-like MADS-box protein AGL8 homolog (AGL8) from Sinapis alba (White mustard).